The primary structure comprises 53 residues: ATP synthase protein 8 (53 aa).

Residues 9 to 29 (WLILFFIFSITLVIFNILNYF) traverse the membrane as a helical segment.

Belongs to the ATPase protein 8 family. As to quaternary structure, F-type ATPases have 2 components, CF(1) - the catalytic core - and CF(0) - the membrane proton channel.

Its subcellular location is the mitochondrion membrane. Mitochondrial membrane ATP synthase (F(1)F(0) ATP synthase or Complex V) produces ATP from ADP in the presence of a proton gradient across the membrane which is generated by electron transport complexes of the respiratory chain. F-type ATPases consist of two structural domains, F(1) - containing the extramembraneous catalytic core and F(0) - containing the membrane proton channel, linked together by a central stalk and a peripheral stalk. During catalysis, ATP synthesis in the catalytic domain of F(1) is coupled via a rotary mechanism of the central stalk subunits to proton translocation. Part of the complex F(0) domain. Minor subunit located with subunit a in the membrane. The chain is ATP synthase protein 8 (mt:ATPase8) from Anopheles quadrimaculatus (Common malaria mosquito).